A 78-amino-acid chain; its full sequence is Acyl carrier protein (78 aa).

One can recognise a Carrier domain in the interval 2-77 (SEIASRVKAI…DAVSYIEEHA (76 aa)). Residue S37 is modified to O-(pantetheine 4'-phosphoryl)serine.

The protein belongs to the acyl carrier protein (ACP) family. 4'-phosphopantetheine is transferred from CoA to a specific serine of apo-ACP by AcpS. This modification is essential for activity because fatty acids are bound in thioester linkage to the sulfhydryl of the prosthetic group.

It localises to the cytoplasm. It functions in the pathway lipid metabolism; fatty acid biosynthesis. Carrier of the growing fatty acid chain in fatty acid biosynthesis. In Bacteroides thetaiotaomicron (strain ATCC 29148 / DSM 2079 / JCM 5827 / CCUG 10774 / NCTC 10582 / VPI-5482 / E50), this protein is Acyl carrier protein.